The following is a 386-amino-acid chain: Succinate--CoA ligase [ADP-forming] subunit beta (386 aa).

In terms of domain architecture, ATP-grasp spans 9 to 244 (KQVLRSSNLN…DSQIDAKEAA (236 aa)). Residues lysine 46, 53 to 55 (GRG), glutamate 99, leucine 102, and glutamate 107 each bind ATP. Asparagine 199 and aspartate 213 together coordinate Mg(2+). Residues asparagine 264 and 321-323 (GIV) each bind substrate.

It belongs to the succinate/malate CoA ligase beta subunit family. In terms of assembly, heterotetramer of two alpha and two beta subunits. It depends on Mg(2+) as a cofactor.

It catalyses the reaction succinate + ATP + CoA = succinyl-CoA + ADP + phosphate. The catalysed reaction is GTP + succinate + CoA = succinyl-CoA + GDP + phosphate. It participates in carbohydrate metabolism; tricarboxylic acid cycle; succinate from succinyl-CoA (ligase route): step 1/1. In terms of biological role, succinyl-CoA synthetase functions in the citric acid cycle (TCA), coupling the hydrolysis of succinyl-CoA to the synthesis of either ATP or GTP and thus represents the only step of substrate-level phosphorylation in the TCA. The beta subunit provides nucleotide specificity of the enzyme and binds the substrate succinate, while the binding sites for coenzyme A and phosphate are found in the alpha subunit. This chain is Succinate--CoA ligase [ADP-forming] subunit beta, found in Thiobacillus denitrificans (strain ATCC 25259 / T1).